A 119-amino-acid polypeptide reads, in one-letter code: Defensin-like protein 260 (119 aa).

The N-terminal stretch at 1-24 is a signal peptide; the sequence is MKIASLKLLLLVSLLFAVTQNGIS. Disulfide bonds link C44–C99, C63–C79, C69–C83, and C73–C85.

This sequence belongs to the DEFL family.

The protein localises to the secreted. The sequence is that of Defensin-like protein 260 from Arabidopsis thaliana (Mouse-ear cress).